The sequence spans 487 residues: Glutamate--tRNA ligase (487 aa).

The short motif at 12-22 (PSPTGYMHVGN) is the 'HIGH' region element. The 'KMSKS' region motif lies at 249-253 (KLSKR). ATP is bound at residue K252.

Belongs to the class-I aminoacyl-tRNA synthetase family. Glutamate--tRNA ligase type 1 subfamily. In terms of assembly, monomer.

It localises to the cytoplasm. The catalysed reaction is tRNA(Glu) + L-glutamate + ATP = L-glutamyl-tRNA(Glu) + AMP + diphosphate. Its function is as follows. Catalyzes the attachment of glutamate to tRNA(Glu) in a two-step reaction: glutamate is first activated by ATP to form Glu-AMP and then transferred to the acceptor end of tRNA(Glu). The polypeptide is Glutamate--tRNA ligase (Clostridium novyi (strain NT)).